Reading from the N-terminus, the 192-residue chain is Probable cobalt-precorrin-6B C(15)-methyltransferase (decarboxylating) (192 aa).

Residues Thr-20, 44–48, Glu-68, and Ala-96 contribute to the S-adenosyl-L-methionine site; that span reads GSGTG.

It belongs to the methyltransferase superfamily. Archaeal-type CbiT family.

The catalysed reaction is Co-precorrin-6B + S-adenosyl-L-methionine = Co-precorrin-7 + S-adenosyl-L-homocysteine + CO2. The protein operates within cofactor biosynthesis; adenosylcobalamin biosynthesis; cob(II)yrinate a,c-diamide from sirohydrochlorin (anaerobic route): step 8/10. Its function is as follows. Catalyzes the methylation of C-15 in cobalt-precorrin-6B followed by the decarboxylation of C-12 to form cobalt-precorrin-7. The protein is Probable cobalt-precorrin-6B C(15)-methyltransferase (decarboxylating) of Sulfolobus acidocaldarius (strain ATCC 33909 / DSM 639 / JCM 8929 / NBRC 15157 / NCIMB 11770).